Here is a 218-residue protein sequence, read N- to C-terminus: Eukaryotic translation initiation factor 4E-1 (218 aa).

The disordered stretch occupies residues 1 to 39 (MAEETDTRPASAGSRGRPAPEDDDREEGEITDLACAPSP). Positions 21–30 (EDDDREEGEI) are enriched in acidic residues. EIF4G-binding stretches follow at residues 43 to 46 (HPLE) and 53 to 89 (FDNP…NNIN). MRNA is bound by residues 61–66 (KQAAWG), Lys93, and 111–112 (WE). Cys116 and Cys154 form a disulfide bridge. Residues 137–146 (HTLLAMIGEQ) form an EIF4G-binding region. MRNA-binding positions include 161-166 (RGKQER) and 206-210 (KKMDK).

The protein belongs to the eukaryotic initiation factor 4E family. As to quaternary structure, EIF4F is a multi-subunit complex, the composition of which varies with external and internal environmental conditions. It is composed of at least EIF4A, EIF4E and EIF4G. EIF4E is also known to interact with other partners. In higher plants two isoforms of EIF4F have been identified, named isoform EIF4F and isoform EIF(iso)4F. Isoform EIF4F has subunits p220 and p26, whereas isoform EIF(iso)4F has subunits p82 and p28. In terms of processing, according to the redox status, the Cys-116-Cys-154 disulfide bridge may have a role in regulating protein function by affecting its ability to bind capped mRNA. Phosphorylated upon oxygen deprivation.

The protein resides in the nucleus. It is found in the cytoplasm. In terms of biological role, component of the protein complex eIF4F, which is involved in the recognition of the mRNA cap, ATP-dependent unwinding of 5'-terminal secondary structure and recruitment of mRNA to the ribosome. Recognizes and binds the 7-methylguanosine-containing mRNA cap during an early step in the initiation of protein synthesis and facilitates ribosome binding by inducing the unwinding of the mRNAs secondary structures. This Zea mays (Maize) protein is Eukaryotic translation initiation factor 4E-1.